A 173-amino-acid polypeptide reads, in one-letter code: Flavodoxin (173 aa).

Positions I2–V168 constitute a Flavodoxin-like domain.

The protein belongs to the flavodoxin family. FMN serves as cofactor.

Functionally, low-potential electron donor to a number of redox enzymes. The protein is Flavodoxin of Chondrus crispus (Carrageen Irish moss).